Here is a 563-residue protein sequence, read N- to C-terminus: Arginine--tRNA ligase (563 aa).

Positions 121–131 match the 'HIGH' region motif; the sequence is PNIAKPFSIGH.

It belongs to the class-I aminoacyl-tRNA synthetase family. As to quaternary structure, monomer.

Its subcellular location is the cytoplasm. It catalyses the reaction tRNA(Arg) + L-arginine + ATP = L-arginyl-tRNA(Arg) + AMP + diphosphate. The chain is Arginine--tRNA ligase from Streptococcus agalactiae serotype Ia (strain ATCC 27591 / A909 / CDC SS700).